The chain runs to 301 residues: MKIGILSQFPELYSTRRLVAACESRGHEAVVINTLNCYMNINSIKPSIHYQGQELTGFDAIIPRIHASVTFYGCAVVRQFEMMGVFAANDSISIARSRDKLRALQLLSRKGIGMPITGFANKPNDIPDLINMVGGAPLVIKLLEGTQGIGVVLAETKTAAESVIEAFLGLKANIMVQEYIKESNGSDIRCFVVGDKVVASMKRQGPEGDFRSNLHLGGCGEKVKITPAERKMAVAAVKAMGLVVAGVDILRSNRGPLILEVNSAPGIEGIEQTTGISVTEPIVEYIEKMVSARKSNRAVIA.

The ATP-grasp domain occupies 104 to 287 (LQLLSRKGIG…VTEPIVEYIE (184 aa)). ATP is bound by residues Lys-141, 178 to 179 (EY), Asp-187, and 211 to 213 (RSN). Residues Asp-248, Glu-260, and Asn-262 each contribute to the Mg(2+) site. Mn(2+) contacts are provided by Asp-248, Glu-260, and Asn-262.

This sequence belongs to the RimK family. The cofactor is Mg(2+). Mn(2+) is required as a cofactor.

The polypeptide is Probable alpha-L-glutamate ligase 1 (Shewanella sp. (strain ANA-3)).